Reading from the N-terminus, the 355-residue chain is DnaJ homolog dnj-20 (355 aa).

The N-terminal stretch at 1-21 is a signal peptide; it reads MRILNVSLLVLASSLVAFVEC. One can recognise a J domain in the interval 24-89; it reads DFYKILGVAK…EKRAMYDRHG (66 aa).

The sequence is that of DnaJ homolog dnj-20 from Caenorhabditis elegans.